Consider the following 186-residue polypeptide: Inner membrane-spanning protein YciB (186 aa).

Helical transmembrane passes span 3 to 23 (FLFDLFPVILFFAAFKVAGIY), 24 to 44 (VATTVAMVATVAQIAWVWFKH), 49 to 69 (AMQWLSLLIIVVFGGATLIFH), 76 to 96 (WKPTVLYWMFGVVLLGSAVLL), 121 to 141 (LVWSLFFLAMGGLNLYVAYHF), and 149 to 169 (FKLFGSMGLMVVFILVQSVWL).

The protein belongs to the YciB family.

Its subcellular location is the cell inner membrane. Its function is as follows. Plays a role in cell envelope biogenesis, maintenance of cell envelope integrity and membrane homeostasis. In Ralstonia nicotianae (strain ATCC BAA-1114 / GMI1000) (Ralstonia solanacearum), this protein is Inner membrane-spanning protein YciB.